The following is an 85-amino-acid chain: Homeobox protein knotted-1-like 7 (85 aa).

Residues 1–21 (ELKNELKQGYKEKLVDIREEI) enclose the ELK domain. Positions 22 to 85 (MRKRRAGKLP…NQRKRNWHSN (64 aa)) form a DNA-binding region, homeobox; TALE-type.

It belongs to the TALE/KNOX homeobox family. In terms of tissue distribution, expressed in all tissues examined. Highest expression in leaves.

It localises to the nucleus. The polypeptide is Homeobox protein knotted-1-like 7 (KNOX7) (Zea mays (Maize)).